A 327-amino-acid polypeptide reads, in one-letter code: MAWWKAWVEQEGVSVKGSSHFNPDPDAETLYKAMKGIGTNEQAIIDVLTKRSNVQRQQIAKSFKAQFGKDLTETLKSELSGKFERLIVALMYPPYRYEAKELHDAMKGLGTKEGVIIEILASRTKNQLREIMKAYEEDYGSTLEEDIQGDTSGYLERILVCLLQGCRDDVSGFVDPGLALQDAQDLHAAGEKILGTDEMKFITILCTRSATHLMRVFEEYEKIANKSIEDSIKSETHGSLEEAMLTVVKCTRNVHSYFAERLYYAMKGAGTLDGTLIRNIVSRSEIDLNLIKSQFQKMYGKTLSSMIMGDTSGYYKTALLNLVGTDL.

4 Annexin repeats span residues 21-92 (FNPD…ALMY), 93-164 (PPYR…CLLQ), 177-249 (GLAL…TVVK), and 253-324 (NVHS…NLVG). Positions 266, 268, 270, and 310 each coordinate Ca(2+).

Belongs to the annexin family.

In terms of biological role, this protein is an anticoagulant protein that acts as an indirect inhibitor of the thromboplastin-specific complex, which is involved in the blood coagulation cascade. The chain is Annexin A8 (Anxa8) from Rattus norvegicus (Rat).